The sequence spans 152 residues: UPF0266 membrane protein YobD (152 aa).

The next 3 membrane-spanning stretches (helical) occupy residues L6–M26, I45–H65, and A67–I87.

This sequence belongs to the UPF0266 family.

The protein localises to the cell inner membrane. The polypeptide is UPF0266 membrane protein YobD (Escherichia coli O127:H6 (strain E2348/69 / EPEC)).